A 364-amino-acid polypeptide reads, in one-letter code: Mannose-1-phosphate guanylyltransferase catalytic subunit beta (364 aa).

Residues 2–220 (KALILVGGYG…PGFWMDVGQP (219 aa)) form a substrate-binding domain region. Residue Asp-109 coordinates GDP-alpha-D-mannose. Asp-109 contacts Mg(2+). Residue Lys-160 is part of the active site. Asp-216 provides a ligand contact to GDP-alpha-D-mannose. Residue Asp-216 participates in Mg(2+) binding. Residues 243–364 (ATGSNIHGTA…VNVPSKDIIM (122 aa)) are hexapeptide repeat domain.

The protein belongs to the transferase hexapeptide repeat family. As to quaternary structure, component of the GMPPA-GMPPB mannose-1-phosphate guanylyltransferase complex composed of 4 GMPPA subunits and 8 tag-335/GMPPB subunits; the complex is organized into three layers, a central layer made up of 2 GMPPA dimers sandwiched between two layers each made up of 2 tag-335/GMPPB dimers. Catalytic activity of tag-335/GMPPB is reduced when part of the complex and binding of GDP-alpha-D-Mannose by GMPPA induces allosteric feedback inhibition of tag-335/GMPPB. Mg(2+) is required as a cofactor.

It carries out the reaction alpha-D-mannose 1-phosphate + GTP + H(+) = GDP-alpha-D-mannose + diphosphate. It functions in the pathway nucleotide-sugar biosynthesis; GDP-alpha-D-mannose biosynthesis; GDP-alpha-D-mannose from alpha-D-mannose 1-phosphate (GTP route): step 1/1. With respect to regulation, enzyme activity is reduced by incorporation into the GMPPA-GMPPB mannose-1-phosphate guanylyltransferase complex. Allosterically inhibited, when part of the GMPPA-GMPPB complex, by GDP-alpha-D-mannose binding to GMPPA. In terms of biological role, catalytic subunit of the GMPPA-GMPPB mannose-1-phosphate guanylyltransferase complex. Catalyzes the formation of GDP-mannose, an essential precursor of glycan moieties of glycoproteins and glycolipids. Can catalyze the reverse reaction in vitro. Together with GMPPA regulates GDP-alpha-D-mannose levels. The protein is Mannose-1-phosphate guanylyltransferase catalytic subunit beta of Caenorhabditis briggsae.